The chain runs to 121 residues: Small ribosomal subunit protein uS13 (121 aa).

The interval proline 96–lysine 121 is disordered. Over residues alanine 106–lysine 121 the composition is skewed to basic residues.

It belongs to the universal ribosomal protein uS13 family. As to quaternary structure, part of the 30S ribosomal subunit. Forms a loose heterodimer with protein S19. Forms two bridges to the 50S subunit in the 70S ribosome.

Its function is as follows. Located at the top of the head of the 30S subunit, it contacts several helices of the 16S rRNA. In the 70S ribosome it contacts the 23S rRNA (bridge B1a) and protein L5 of the 50S subunit (bridge B1b), connecting the 2 subunits; these bridges are implicated in subunit movement. Contacts the tRNAs in the A and P-sites. The polypeptide is Small ribosomal subunit protein uS13 (Streptococcus pneumoniae serotype 4 (strain ATCC BAA-334 / TIGR4)).